The primary structure comprises 470 residues: MTKKLPDDFIFGGATAAYQAEGATQTDGKGRVAWDTYLEENYWYTAEPASDFYNRYPVDLELSERFGVNGIRISIAWSRIFPKGYGEVNQKGVEYYHNLFKECHKRHVEPFVTLHHFDTPEVLHKDGDFLNRKTIDYFVDYAEFCFKEFPEVKYWTTFNEIGPIGDGQYLVGKFPPGIKYDFEKVFQSHHNMMVAHARAVKLFKDENYKGEIGVVHALPTKYPYDPSNPEDVRAAELEDIIHNKFILDATYLGKYSRETMEGVQHILSVNGGQLEISDEDYKILDEAKDLNDFLGINYYMSDWMRGFEGESEITHNATGDKGGSKYQLKGVGQREFDVDVPRTDWDWMIYPQGLYDQIMRVVKDYPNYHKIYITENGLGYKDVFDEKEKTVHDDARIDYIKQHLSVIADAIADGANVKGYFLWSLMDVFSWSNGYEKRYGLFYVDFETQERFPKKSAYWYKELAESKEIK.

Glutamine 19, histidine 116, asparagine 159, glutamate 160, and asparagine 297 together coordinate D-galactose 6-phosphate. The active-site Proton donor is glutamate 160. The active-site Nucleophile is glutamate 375. D-galactose 6-phosphate contacts are provided by serine 430, tryptophan 431, lysine 437, and tyrosine 439.

Belongs to the glycosyl hydrolase 1 family.

It carries out the reaction a 6-phospho-beta-D-galactoside + H2O = D-galactose 6-phosphate + an alcohol. It participates in carbohydrate metabolism; lactose degradation; D-galactose 6-phosphate and beta-D-glucose from lactose 6-phosphate: step 1/1. This chain is 6-phospho-beta-galactosidase, found in Staphylococcus epidermidis (strain ATCC 35984 / DSM 28319 / BCRC 17069 / CCUG 31568 / BM 3577 / RP62A).